Reading from the N-terminus, the 180-residue chain is Pro-glucagon (180 aa).

An N-terminal signal peptide occupies residues 1 to 20 (MKTIYFVAGLLIMLVQGSWQ). The disordered stretch occupies residues 25 to 58 (DTEENPRSFPASQTEAHEDPDEMNEDKRHSQGTF). Residue Ser-54 is modified to Phosphoserine. The propeptide occupies 84–89 (NRNNIA). Ser-105 and Ser-108 each carry phosphoserine. Arginine amide is present on Arg-127. Residues 131–145 (DFPEEVAIAEELGRR) constitute a propeptide that is removed on maturation. Phosphoserine occurs at positions 150 and 152.

Belongs to the glucagon family. Proglucagon is post-translationally processed in a tissue-specific manner in pancreatic A cells and intestinal L cells. In pancreatic A cells, the major bioactive hormone is glucagon cleaved by PCSK2/PC2. In the intestinal L cells PCSK1/PC1 liberates GLP-1, GLP-2, glicentin and oxyntomodulin. GLP-1 is further N-terminally truncated by post-translational processing in the intestinal L cells resulting in GLP-1(7-37) GLP-1-(7-36)amide. The C-terminal amidation is neither important for the metabolism of GLP-1 nor for its effects on the endocrine pancreas. Secreted in the A cells of the islets of Langerhans. As to expression, secreted in the A cells of the islets of Langerhans. Secreted from enteroendocrine L cells throughout the gastrointestinal tract. Also secreted in selected neurons in the brain. In terms of tissue distribution, secreted from enteroendocrine cells throughout the gastrointestinal tract. Also secreted in selected neurons in the brain. Secreted from enteroendocrine cells throughout the gastrointestinal tract.

It is found in the secreted. Functionally, plays a key role in glucose metabolism and homeostasis. Regulates blood glucose by increasing gluconeogenesis and decreasing glycolysis. A counterregulatory hormone of insulin, raises plasma glucose levels in response to insulin-induced hypoglycemia. Plays an important role in initiating and maintaining hyperglycemic conditions in diabetes. In terms of biological role, potent stimulator of glucose-dependent insulin release. Also stimulates insulin release in response to IL6. Plays important roles on gastric motility and the suppression of plasma glucagon levels. May be involved in the suppression of satiety and stimulation of glucose disposal in peripheral tissues, independent of the actions of insulin. Has growth-promoting activities on intestinal epithelium. May also regulate the hypothalamic pituitary axis (HPA) via effects on LH, TSH, CRH, oxytocin, and vasopressin secretion. Increases islet mass through stimulation of islet neogenesis and pancreatic beta cell proliferation. Inhibits beta cell apoptosis. Its function is as follows. Stimulates intestinal growth and up-regulates villus height in the small intestine, concomitant with increased crypt cell proliferation and decreased enterocyte apoptosis. The gastrointestinal tract, from the stomach to the colon is the principal target for GLP-2 action. Plays a key role in nutrient homeostasis, enhancing nutrient assimilation through enhanced gastrointestinal function, as well as increasing nutrient disposal. Stimulates intestinal glucose transport and decreases mucosal permeability. Significantly reduces food intake. Inhibits gastric emptying in humans. Suppression of gastric emptying may lead to increased gastric distension, which may contribute to satiety by causing a sensation of fullness. Functionally, may modulate gastric acid secretion and the gastro-pyloro-duodenal activity. May play an important role in intestinal mucosal growth in the early period of life. In Mus musculus (Mouse), this protein is Pro-glucagon (Gcg).